The following is a 632-amino-acid chain: 1-deoxy-D-xylulose-5-phosphate synthase (632 aa).

Thiamine diphosphate is bound by residues His79 and Gly120 to Ala122. A Mg(2+)-binding site is contributed by Asp151. Thiamine diphosphate contacts are provided by residues Gly152–Ser153, Asn180, Phe292, and Glu376. Asn180 lines the Mg(2+) pocket.

It belongs to the transketolase family. DXPS subfamily. Homodimer. Requires Mg(2+) as cofactor. The cofactor is thiamine diphosphate.

It catalyses the reaction D-glyceraldehyde 3-phosphate + pyruvate + H(+) = 1-deoxy-D-xylulose 5-phosphate + CO2. It participates in metabolic intermediate biosynthesis; 1-deoxy-D-xylulose 5-phosphate biosynthesis; 1-deoxy-D-xylulose 5-phosphate from D-glyceraldehyde 3-phosphate and pyruvate: step 1/1. Its function is as follows. Catalyzes the acyloin condensation reaction between C atoms 2 and 3 of pyruvate and glyceraldehyde 3-phosphate to yield 1-deoxy-D-xylulose-5-phosphate (DXP). In Azobacteroides pseudotrichonymphae genomovar. CFP2, this protein is 1-deoxy-D-xylulose-5-phosphate synthase.